Here is a 376-residue protein sequence, read N- to C-terminus: N-acetyldiaminopimelate deacetylase (376 aa).

The active site involves Asp-69. The active-site Proton acceptor is Glu-128.

Belongs to the peptidase M20A family. N-acetyldiaminopimelate deacetylase subfamily.

It catalyses the reaction N-acetyl-(2S,6S)-2,6-diaminopimelate + H2O = (2S,6S)-2,6-diaminopimelate + acetate. Its pathway is amino-acid biosynthesis; L-lysine biosynthesis via DAP pathway; LL-2,6-diaminopimelate from (S)-tetrahydrodipicolinate (acetylase route): step 3/3. Catalyzes the conversion of N-acetyl-diaminopimelate to diaminopimelate and acetate. The sequence is that of N-acetyldiaminopimelate deacetylase from Bacillus thuringiensis subsp. konkukian (strain 97-27).